The following is a 425-amino-acid chain: Serine hydroxymethyltransferase (425 aa).

(6S)-5,6,7,8-tetrahydrofolate contacts are provided by residues leucine 128 and 132-134; that span reads GHL. Lysine 237 carries the post-translational modification N6-(pyridoxal phosphate)lysine.

Belongs to the SHMT family. Homodimer. Requires pyridoxal 5'-phosphate as cofactor.

Its subcellular location is the cytoplasm. The catalysed reaction is (6R)-5,10-methylene-5,6,7,8-tetrahydrofolate + glycine + H2O = (6S)-5,6,7,8-tetrahydrofolate + L-serine. The protein operates within one-carbon metabolism; tetrahydrofolate interconversion. It participates in amino-acid biosynthesis; glycine biosynthesis; glycine from L-serine: step 1/1. Functionally, catalyzes the reversible interconversion of serine and glycine with tetrahydrofolate (THF) serving as the one-carbon carrier. This reaction serves as the major source of one-carbon groups required for the biosynthesis of purines, thymidylate, methionine, and other important biomolecules. Also exhibits THF-independent aldolase activity toward beta-hydroxyamino acids, producing glycine and aldehydes, via a retro-aldol mechanism. In Wolbachia pipientis subsp. Culex pipiens (strain wPip), this protein is Serine hydroxymethyltransferase.